Consider the following 88-residue polypeptide: Small ribosomal subunit protein uS15c (88 aa).

This sequence belongs to the universal ribosomal protein uS15 family. Part of the 30S ribosomal subunit.

The protein localises to the plastid. It is found in the chloroplast. The sequence is that of Small ribosomal subunit protein uS15c (rps15) from Aethionema grandiflorum (Persian stone-cress).